A 107-amino-acid polypeptide reads, in one-letter code: Iron-binding protein IscA (107 aa).

Fe cation is bound by residues Cys35, Cys99, and Cys101.

It belongs to the HesB/IscA family. As to quaternary structure, homodimer; may form tetramers and higher multimers. Fe cation is required as a cofactor.

In terms of biological role, is able to transfer iron-sulfur clusters to apo-ferredoxin. Multiple cycles of [2Fe2S] cluster formation and transfer are observed, suggesting that IscA acts catalytically. Recruits intracellular free iron so as to provide iron for the assembly of transient iron-sulfur cluster in IscU in the presence of IscS, L-cysteine and the thioredoxin reductase system TrxA/TrxB. The sequence is that of Iron-binding protein IscA from Klebsiella pneumoniae subsp. pneumoniae (strain ATCC 700721 / MGH 78578).